We begin with the raw amino-acid sequence, 100 residues long: Large ribosomal subunit protein uL23 (100 aa).

Belongs to the universal ribosomal protein uL23 family. In terms of assembly, part of the 50S ribosomal subunit. Contacts protein L29, and trigger factor when it is bound to the ribosome.

Functionally, one of the early assembly proteins it binds 23S rRNA. One of the proteins that surrounds the polypeptide exit tunnel on the outside of the ribosome. Forms the main docking site for trigger factor binding to the ribosome. The polypeptide is Large ribosomal subunit protein uL23 (Mycolicibacterium vanbaalenii (strain DSM 7251 / JCM 13017 / BCRC 16820 / KCTC 9966 / NRRL B-24157 / PYR-1) (Mycobacterium vanbaalenii)).